A 276-amino-acid polypeptide reads, in one-letter code: Bis(5'-nucleosyl)-tetraphosphatase, symmetrical (276 aa).

The protein belongs to the Ap4A hydrolase family.

It catalyses the reaction P(1),P(4)-bis(5'-adenosyl) tetraphosphate + H2O = 2 ADP + 2 H(+). Hydrolyzes diadenosine 5',5'''-P1,P4-tetraphosphate to yield ADP. The polypeptide is Bis(5'-nucleosyl)-tetraphosphatase, symmetrical (Neisseria gonorrhoeae (strain ATCC 700825 / FA 1090)).